The primary structure comprises 105 residues: Guanidinium exporter (105 aa).

Residues Met1–Lys21 form a helical membrane-spanning segment. Residues Tyr22–Arg28 are Cytoplasmic-facing. A helical transmembrane segment spans residues Leu29–Ala49. Residues Met50–Thr57 are Periplasmic-facing. The helical transmembrane segment at Ala58–Leu78 threads the bilayer. At Gly79 to Ser81 the chain is on the cytoplasmic side. Residues Ala82–Leu102 form a helical membrane-spanning segment. Topologically, residues Ser103–His105 are periplasmic.

This sequence belongs to the drug/metabolite transporter (DMT) superfamily. Small multidrug resistance (SMR) (TC 2.A.7.1) family. Gdx/SugE subfamily.

The protein localises to the cell inner membrane. In terms of biological role, guanidinium ion exporter. Couples guanidinium export to the proton motive force, exchanging one guanidinium ion for two protons. The polypeptide is Guanidinium exporter (Escherichia coli O6:H1 (strain CFT073 / ATCC 700928 / UPEC)).